We begin with the raw amino-acid sequence, 204 residues long: Guanylate kinase (204 aa).

The region spanning 16–196 (AKVIIFSAPS…AKAHALKVIK (181 aa)) is the Guanylate kinase-like domain. 23 to 30 (APSGSGKS) lines the ATP pocket.

This sequence belongs to the guanylate kinase family.

Its subcellular location is the cytoplasm. The catalysed reaction is GMP + ATP = GDP + ADP. Functionally, essential for recycling GMP and indirectly, cGMP. The chain is Guanylate kinase from Bacteroides fragilis (strain ATCC 25285 / DSM 2151 / CCUG 4856 / JCM 11019 / LMG 10263 / NCTC 9343 / Onslow / VPI 2553 / EN-2).